We begin with the raw amino-acid sequence, 239 residues long: Prolyl hydroxylase EGLN3 (239 aa).

The tract at residues 62 to 73 (AGPRAGVSKRHL) is beta(2)beta(3) 'finger-like' loop. The required for interaction with ADRB2 stretch occupies residues 88–104 (CEAINFLLSLIDRLVLY). In terms of domain architecture, Fe2OG dioxygenase spans 116–214 (ERSKAMVACY…RYAMTVWYFD (99 aa)). Fe cation-binding residues include His135, Asp137, and His196. Residue Arg205 coordinates 2-oxoglutarate.

In terms of assembly, interacts with ADRB2; the interaction hydroxylates ADRB2 facilitating its ubiquitination by the VHL-E3 ligase complex. Interacts with PKM; the interaction hydroxylates PKM in hypoxia. Interacts with WDR83; the interaction leads to almost complete elimination of HIF-mediated reporter activity. Interacts with BCL2 (via its BH4 domain); the interaction disrupts the BAX-BCL4 complex inhibiting the anti-apoptotic activity of BCL2. Interacts with LIMD1, WTIP and AJUBA. Fe(2+) serves as cofactor. It depends on L-ascorbate as a cofactor. Ubiquitinated by SIAH1 and/or SIAH2 in response to the unfolded protein response (UPR), leading to its degradation. Highly expressed in cardiac and smooth muscle. Also high expression in brain, skeletal muscle and kidney. Low levels in lung.

The protein localises to the nucleus. It is found in the cytoplasm. It carries out the reaction L-prolyl-[protein] + 2-oxoglutarate + O2 = trans-4-hydroxy-L-prolyl-[protein] + succinate + CO2. It catalyses the reaction L-prolyl-[hypoxia-inducible factor alpha subunit] + 2-oxoglutarate + O2 = trans-4-hydroxy-L-prolyl-[hypoxia-inducible factor alpha subunit] + succinate + CO2. In terms of biological role, prolyl hydroxylase that mediates hydroxylation of proline residues in target proteins, such as PKM, TELO2, ATF4 and HIF1A. Target proteins are preferentially recognized via a LXXLAP motif. Cellular oxygen sensor that catalyzes, under normoxic conditions, the post-translational formation of 4-hydroxyproline in hypoxia-inducible factor (HIF) alpha proteins. Hydroxylates a specific proline found in each of the oxygen-dependent degradation (ODD) domains (N-terminal, NODD, and C-terminal, CODD) of HIF1A. Also hydroxylates HIF2A. Has a preference for the CODD site for both HIF1A and HIF2A. Hydroxylation on the NODD site by EGLN3 appears to require prior hydroxylation on the CODD site. Hydroxylated HIFs are then targeted for proteasomal degradation via the von Hippel-Lindau ubiquitination complex. Under hypoxic conditions, the hydroxylation reaction is attenuated allowing HIFs to escape degradation resulting in their translocation to the nucleus, heterodimerization with HIF1B, and increased expression of hypoxy-inducible genes. ELGN3 is the most important isozyme in limiting physiological activation of HIFs (particularly HIF2A) in hypoxia. Also hydroxylates PKM in hypoxia, limiting glycolysis. Under normoxia, hydroxylates and regulates the stability of ADRB2. Regulator of cardiomyocyte and neuronal apoptosis. In cardiomyocytes, inhibits the anti-apoptotic effect of BCL2 by disrupting the BAX-BCL2 complex. In neurons, has a NGF-induced proapoptotic effect, probably through regulating CASP3 activity. Also essential for hypoxic regulation of neutrophilic inflammation. Plays a crucial role in DNA damage response (DDR) by hydroxylating TELO2, promoting its interaction with ATR which is required for activation of the ATR/CHK1/p53 pathway. Also mediates hydroxylation of ATF4, leading to decreased protein stability of ATF4. The polypeptide is Prolyl hydroxylase EGLN3 (Mus musculus (Mouse)).